A 513-amino-acid polypeptide reads, in one-letter code: Probable metalloreductase AIM14 (513 aa).

7 helical membrane passes run 22-42, 66-86, 103-123, 138-158, 166-186, 193-213, and 219-239; these read GYIIFGVSVLYALLLASAHFL, PFWVHTLLWAAIVVGLAFTNV, LAFCLVPLDLALALRPCLLGQ, LIILAGVVHGIGFFVKWTIHH, WANLAGIIVALFSVLLVIVSS, FYSYFYAFHNFTVALFVLLMI, and GVSDFVLLSVALLLFQGASRV. Residues 100 to 211 enclose the Ferric oxidoreductase domain; that stretch reads LGRLAFCLVP…NFTVALFVLL (112 aa). In terms of domain architecture, FAD-binding FR-type spans 240 to 368; that stretch reads YNGYSVPGLT…GIPLYEYFDN (129 aa).

This sequence belongs to the ferric reductase (FRE) family. AIM14 subfamily.

Its subcellular location is the membrane. Its function is as follows. Probable cell surface metalloreductase. May be involved in iron or copper homeostasis. The polypeptide is Probable metalloreductase AIM14 (AIM14) (Clavispora lusitaniae (strain ATCC 42720) (Yeast)).